The chain runs to 248 residues: Meiotically up-regulated gene 65 protein (248 aa).

Its function is as follows. Has a role in meiosis. This is Meiotically up-regulated gene 65 protein (mug65) from Schizosaccharomyces pombe (strain 972 / ATCC 24843) (Fission yeast).